A 202-amino-acid chain; its full sequence is Large ribosomal subunit protein bL25 (202 aa).

It belongs to the bacterial ribosomal protein bL25 family. CTC subfamily. In terms of assembly, part of the 50S ribosomal subunit; part of the 5S rRNA/L5/L18/L25 subcomplex. Contacts the 5S rRNA. Binds to the 5S rRNA independently of L5 and L18.

In terms of biological role, this is one of the proteins that binds to the 5S RNA in the ribosome where it forms part of the central protuberance. This Burkholderia ambifaria (strain MC40-6) protein is Large ribosomal subunit protein bL25.